The chain runs to 89 residues: Small ribosomal subunit protein uS14 (89 aa).

Belongs to the universal ribosomal protein uS14 family. As to quaternary structure, part of the 30S ribosomal subunit. Contacts proteins S3 and S10.

Its function is as follows. Binds 16S rRNA, required for the assembly of 30S particles and may also be responsible for determining the conformation of the 16S rRNA at the A site. This Flavobacterium psychrophilum (strain ATCC 49511 / DSM 21280 / CIP 103535 / JIP02/86) protein is Small ribosomal subunit protein uS14.